A 256-amino-acid chain; its full sequence is uncharacterized protein (256 aa).

Positions 1–24 are cleaved as a signal peptide; the sequence is MIKRVNKLVLGISLLFLVISITAG. C25 carries N-palmitoyl cysteine lipidation. Residue C25 is the site of S-diacylglycerol cysteine attachment.

Belongs to the staphylococcal tandem lipoprotein family.

It is found in the cell membrane. This is an uncharacterized protein from Staphylococcus aureus.